A 263-amino-acid chain; its full sequence is Hemin import ATP-binding protein HmuV (263 aa).

The 241-residue stretch at 2–242 folds into the ABC transporter domain; it reads IEARDVSVDI…DLIEKVFDCR (241 aa). 34 to 41 provides a ligand contact to ATP; the sequence is GPNGSGKT.

It belongs to the ABC transporter superfamily. Heme (hemin) importer (TC 3.A.1.14.5) family. In terms of assembly, the complex is composed of two ATP-binding proteins (HmuV), two transmembrane proteins (HmuU) and a solute-binding protein (HmuT).

The protein localises to the cell inner membrane. Part of the ABC transporter complex HmuTUV involved in hemin import. Responsible for energy coupling to the transport system. The protein is Hemin import ATP-binding protein HmuV of Mesorhizobium japonicum (strain LMG 29417 / CECT 9101 / MAFF 303099) (Mesorhizobium loti (strain MAFF 303099)).